Reading from the N-terminus, the 872-residue chain is Metabotropic glutamate receptor 2 (872 aa).

The signal sequence occupies residues 1–18 (MESLLGFLALLLLWGAVA). Residues 19 to 567 (EGPAKKVLTL…QEYIRWGDAW (549 aa)) are Extracellular-facing. Cysteine 50 and cysteine 92 form a disulfide bridge. L-glutamate is bound by residues arginine 57, arginine 61, serine 145, alanine 166, and threonine 168. N-linked (GlcNAc...) asparagine glycans are attached at residues asparagine 203 and asparagine 286. 7 disulfides stabilise this stretch: cysteine 234-cysteine 518, cysteine 355-cysteine 362, cysteine 400-cysteine 407, cysteine 500-cysteine 519, cysteine 504-cysteine 522, cysteine 525-cysteine 537, and cysteine 540-cysteine 553. Aspartate 295 is a binding site for L-glutamate. The N-linked (GlcNAc...) asparagine glycan is linked to asparagine 338. Lysine 377 is a binding site for L-glutamate. Asparagine 402 is a glycosylation site (N-linked (GlcNAc...) asparagine). N-linked (GlcNAc...) asparagine glycosylation is present at asparagine 547. A helical membrane pass occupies residues 568-590 (AVGPVTIACLGALATLFVLGVFV). Residues 591-604 (RHNATPVVKASGRE) lie on the Cytoplasmic side of the membrane. Residues 605–625 (LCYILLGGVFLCYCMTFVFIA) traverse the membrane as a helical segment. Over 626-636 (KPSTAVCTLRR) the chain is Extracellular. Residues cysteine 632 and cysteine 721 are joined by a disulfide bond. Residues 637–655 (LGLGTAFSVCYSALLTKTN) form a helical membrane-spanning segment. The Cytoplasmic portion of the chain corresponds to 656-679 (RIARIFGGAREGAQRPRFISPASQ). Residues 677–685 (ASQVAICLA) are important for interaction with HTR2A. A helical membrane pass occupies residues 680 to 700 (VAICLALISGQLLIVAAWLVV). The Extracellular segment spans residues 701–725 (EAPGTGKETAPERREVVTLRCNHRD). The helical transmembrane segment at 726 to 747 (ASMLGSLAYNVLLIALCTLYAF) threads the bilayer. Over 748 to 760 (KTRKCPENFNEAK) the chain is Cytoplasmic. Residues 761–783 (FIGFTMYTTCIIWLAFLPIFYVT) traverse the membrane as a helical segment. Residues 784–793 (SSDYRVQTTT) are Extracellular-facing. Residues 794-819 (MCVSVSLSGSVVLGCLFAPKLHIILF) form a helical membrane-spanning segment. Residues 820-872 (QPQKNVVSHRAPTSRFGSAAPRASANLGQGSGSQFVPTVCNGREVVDSTTSSL) are Cytoplasmic-facing.

The protein belongs to the G-protein coupled receptor 3 family. In terms of assembly, forms heterodimers with GRM3 or GRM4. Interacts with GNAI1. Interacts with TAMALIN. Interacts with HTR2A. Is widely distributed in the CNS and prominent expression is seen in Golgi cells of the cerebellum and some particular neuronal cells in other brain regions.

Its subcellular location is the cell membrane. It is found in the synapse. The protein localises to the cell projection. It localises to the dendrite. Functionally, dimeric G protein-coupled receptor which is activated by the excitatory neurotransmitter L-glutamate. Plays critical roles in modulating synaptic transmission and neuronal excitability. Upon activation by glutamate, inhibits presynaptic calcium channels, reducing further glutamate release and dampening excitatory signaling. Mechanistically, ligand binding causes a conformation change that triggers signaling via guanine nucleotide-binding proteins (G proteins) and modulates the activity of down-stream effectors, such as adenylate cyclase. May mediate suppression of neurotransmission or may be involved in synaptogenesis or synaptic stabilization. This chain is Metabotropic glutamate receptor 2 (Grm2), found in Rattus norvegicus (Rat).